Consider the following 32-residue polypeptide: Peptide II.10.10 (32 aa).

3 disulfides stabilise this stretch: Cys-5/Cys-24, Cys-10/Cys-29, and Cys-14/Cys-31.

The protein belongs to the short scorpion toxin superfamily. Potassium channel inhibitor family. Alpha-KTx 10 subfamily. Expressed by the venom gland.

The protein resides in the secreted. In Centruroides tecomanus (Scorpion), this protein is Peptide II.10.10.